A 233-amino-acid chain; its full sequence is Large ribosomal subunit protein uL1 (233 aa).

The protein belongs to the universal ribosomal protein uL1 family. As to quaternary structure, part of the 50S ribosomal subunit.

Its function is as follows. Binds directly to 23S rRNA. The L1 stalk is quite mobile in the ribosome, and is involved in E site tRNA release. Functionally, protein L1 is also a translational repressor protein, it controls the translation of the L11 operon by binding to its mRNA. The chain is Large ribosomal subunit protein uL1 from Vibrio parahaemolyticus serotype O3:K6 (strain RIMD 2210633).